We begin with the raw amino-acid sequence, 202 residues long: ATP synthase subunit b 1 (202 aa).

Residues 17–37 traverse the membrane as a helical segment; sequence IAAVLCFSVLVPLVAMAAEGG.

This sequence belongs to the ATPase B chain family. As to quaternary structure, F-type ATPases have 2 components, F(1) - the catalytic core - and F(0) - the membrane proton channel. F(1) has five subunits: alpha(3), beta(3), gamma(1), delta(1), epsilon(1). F(0) has three main subunits: a(1), b(2) and c(10-14). The alpha and beta chains form an alternating ring which encloses part of the gamma chain. F(1) is attached to F(0) by a central stalk formed by the gamma and epsilon chains, while a peripheral stalk is formed by the delta and b chains.

It is found in the cell inner membrane. In terms of biological role, f(1)F(0) ATP synthase produces ATP from ADP in the presence of a proton or sodium gradient. F-type ATPases consist of two structural domains, F(1) containing the extramembraneous catalytic core and F(0) containing the membrane proton channel, linked together by a central stalk and a peripheral stalk. During catalysis, ATP synthesis in the catalytic domain of F(1) is coupled via a rotary mechanism of the central stalk subunits to proton translocation. Functionally, component of the F(0) channel, it forms part of the peripheral stalk, linking F(1) to F(0). The protein is ATP synthase subunit b 1 of Syntrophus aciditrophicus (strain SB).